The chain runs to 131 residues: Fumarate reductase subunit C (131 aa).

3 helical membrane passes run glutamate 30–leucine 50, alanine 58–isoleucine 78, and isoleucine 109–leucine 129.

Belongs to the FrdC family. In terms of assembly, part of an enzyme complex containing four subunits: a flavoprotein (FrdA), an iron-sulfur protein (FrdB), and two hydrophobic anchor proteins (FrdC and FrdD).

It is found in the cell inner membrane. Its function is as follows. Two distinct, membrane-bound, FAD-containing enzymes are responsible for the catalysis of fumarate and succinate interconversion; fumarate reductase is used in anaerobic growth, and succinate dehydrogenase is used in aerobic growth. Anchors the catalytic components of the fumarate reductase complex to the cell inner membrane, binds quinones. This Proteus vulgaris protein is Fumarate reductase subunit C.